We begin with the raw amino-acid sequence, 926 residues long: Serine/threonine-protein kinase/endoribonuclease IRE2 (926 aa).

The signal sequence occupies residues 1–34; sequence MASAVRGSRPWPRLGLQLQFAALLLGTLSPQVHT. At 35 to 430 the chain is on the lumenal side; it reads LRPENLLLVS…TPDSYLGLGP (396 aa). Residues 431-451 traverse the membrane as a helical segment; that stretch reads QDLLAASLTAVLLGGWILFVM. Over 452–926 the chain is Cytoplasmic; the sequence is RQQQPQVVEK…RRPCPGATGR (475 aa). Residues 478-501 are compositionally biased toward polar residues; that stretch reads DAQSLHSGASRRSQKRLQSPSKQA. The tract at residues 478 to 509 is disordered; the sequence is DAQSLHSGASRRSQKRLQSPSKQAQPLDDPEA. The Protein kinase domain maps to 520–781; sequence FNPKDVLGRG…APQVLAHPFF (262 aa). Residues 526–534 and K548 each bind ATP; that span reads LGRGAGGTF. The Proton acceptor role is filled by D637. Residues 784–912 form the KEN domain; sequence RAKQLQFFQD…ESLFLPYYPP (129 aa).

The protein belongs to the protein kinase superfamily. Ser/Thr protein kinase family. Mg(2+) is required as a cofactor. Post-translationally, autophosphorylated.

It localises to the endoplasmic reticulum membrane. The enzyme catalyses L-seryl-[protein] + ATP = O-phospho-L-seryl-[protein] + ADP + H(+). The catalysed reaction is L-threonyl-[protein] + ATP = O-phospho-L-threonyl-[protein] + ADP + H(+). The kinase domain is activated by trans-autophosphorylation. Kinase activity is required for activation of the endoribonuclease domain. Functionally, induces translational repression through 28S ribosomal RNA cleavage in response to ER stress. Pro-apoptotic. Appears to play no role in the unfolded-protein response, unlike closely related proteins. This chain is Serine/threonine-protein kinase/endoribonuclease IRE2, found in Homo sapiens (Human).